The following is a 474-amino-acid chain: MFS transporter SAT21 (474 aa).

Transmembrane regions (helical) follow at residues 7–27 (LVLP…LEVP), 64–84 (LVVG…ILYF), 101–121 (CVGY…HQVF), 131–151 (LFLF…AFVA), 162–182 (FLFL…ALAT), and 189–209 (LFLP…LLQM). Residues 220–252 (KVVGSTSDQTEPFLRSSSNSSQESGTAAPAIDP) are disordered. Residues 222 to 244 (VGSTSDQTEPFLRSSSNSSQESG) show a composition bias toward polar residues. An N-linked (GlcNAc...) asparagine glycan is attached at Asn-238. 6 helical membrane-spanning segments follow: residues 276 to 296 (FICY…AFIF), 315 to 335 (LALS…ANAT), 346 to 366 (INIG…IMAW), 374 to 394 (FIFS…LQGV), 406 to 426 (SIFA…GPLM), and 445 to 465 (FLAS…LWAL).

This sequence belongs to the major facilitator superfamily.

It localises to the cell membrane. Functionally, MFS transporter; part of the satratoxin SC3 cluster involved in the biosynthesis of satratoxins, trichothecene mycotoxins that are associated with human food poisonings. Satratoxins are suggested to be made by products of multiple gene clusters (SC1, SC2 and SC3) that encode 21 proteins in all, including polyketide synthases, acetyltransferases, and other enzymes expected to modify the trichothecene skeleton. SC1 encodes 10 proteins, SAT1 to SAT10. The largest are SAT8, which encodes a putative polyketide synthase (PKS) with a conventional non-reducing architecture, and SAT10, a putative protein containing four ankyrin repeats and thus may be involved in protein scaffolding. The putative short-chain reductase SAT3 may assist the PKS in some capacity. SAT6 contains a secretory lipase domain and acts probably as a trichothecene esterase. SAT5 encodes a putative acetyltransferase, and so, with SAT6, may affect endogenous protection from toxicity. The probable transcription factor SAT9 may regulate the expression of the SC1 cluster. SC2 encodes proteins SAT11 to SAT16, the largest of which encodes the putative reducing PKS SAT13. SAT11 is a cytochrome P450 monooxygenase, while SAT14 and SAT16 are probable acetyltransferases. The SC2 cluster may be regulated by the transcription factor SAT15. SC3 is a small cluster that encodes 5 proteins, SAT17 to SAT21. SAT21 is a putative MFS-type transporter which may have a role in exporting secondary metabolites. The four other proteins putatively encoded in SC3 include the taurine hydroxylase-like protein SAT17, the O-methyltransferase SAT18, the acetyltransferase SAT19, and the Cys6-type zinc finger SAT20, the latter being probably involved in regulation of SC3 expression. The protein is MFS transporter SAT21 of Stachybotrys chartarum (strain CBS 109288 / IBT 7711) (Toxic black mold).